The chain runs to 553 residues: Cytokine-like nuclear factor N-PAC (553 aa).

Residues 8-66 (LGDLVWGKLGRYPPWPGKIVNPPKDLKKPRGKKCFFVKFFGTEDHAWIKVEQLKPYHLH) enclose the PWWP domain. Basic and acidic residues-rich tracts occupy residues 92–145 (KTKG…EGKK) and 162–182 (RAQDQSPRKRGRPPKDEKDLT). The segment at 92–188 (KTKGKDQASS…KDLTIPESST (97 aa)) is disordered. The segment at residues 168 to 180 (PRKRGRPPKDEKD) is a DNA-binding region (a.T hook). The segment at 214–217 (DPHF) is interaction with histone H3. The segment at 261–553 (GSITPTDKKI…MSAVYRAYIH (293 aa)) is dehydrogenase domain. NAD(+) is bound by residues 271–285 (GFLGLGLMGSGIVSN), Thr-362, and Lys-505.

The protein belongs to the HIBADH-related family. NP60 subfamily. As to quaternary structure, homotetramere. Binds to mononucleosomes.

It is found in the nucleus. The protein localises to the chromosome. In terms of biological role, cytokine-like nuclear factor with chromatin gene reader activity involved in chromatin modification and regulation of gene expression. Acts as a nucleosome-destabilizing factor that is recruited to genes during transcriptional activation. Recognizes and binds histone H3 without a preference for specific epigenetic markers and also binds DNA. Interacts with KDM1B and promotes its histone demethylase activity by facilitating the capture of H3 tails, they form a multifunctional enzyme complex that modifies transcribed chromatin and facilitates Pol II transcription through nucleosomes. The polypeptide is Cytokine-like nuclear factor N-PAC (GLYR1) (Gallus gallus (Chicken)).